The sequence spans 238 residues: MRIIGLTGGVGTGKSTVARILEQHGIPVADADQMARQALAVGSPIRERVLERYGKVIQTPSGDLDRRRLGQIVFADAAERAWLEAQIHPFVRAQLQDFLSALAEQSSKVHGVPLEEEPASQKRSGVGFSSGQGSQTVCLMIPLLFEAHMENWASEIWVVTCTPEQQRQRLARRDPLTPEEIEARIASQWPLAEKVRRADVVLDNSGSLAELEAQVKQALASAGQRPFASPPRAGYSDG.

One can recognise a DPCK domain in the interval Ile3–Ala233. Gly11 to Thr16 is an ATP binding site. 2 disordered regions span residues His110–Ser129 and Leu219–Gly238.

The protein belongs to the CoaE family.

The protein resides in the cytoplasm. It carries out the reaction 3'-dephospho-CoA + ATP = ADP + CoA + H(+). It participates in cofactor biosynthesis; coenzyme A biosynthesis; CoA from (R)-pantothenate: step 5/5. Its function is as follows. Catalyzes the phosphorylation of the 3'-hydroxyl group of dephosphocoenzyme A to form coenzyme A. The sequence is that of Dephospho-CoA kinase from Synechococcus sp. (strain JA-2-3B'a(2-13)) (Cyanobacteria bacterium Yellowstone B-Prime).